Reading from the N-terminus, the 311-residue chain is MAFLSNMAMFITMLMFSSMMHPCFSQPSCAPMDTMDTNGVDEADIDMMQFPINLEFLEAEFFLWGALGHGLDVVAPQLAMGGPPPYGAQKANLDPLTQNIITEFAYQEVGHLRALERTVGGFPRPLLNLSASNFANLIEAAFGYHLVPPFNPYRDGLSYMLASYAVPYMGLVGYVGTNPNLKGHQTKRLLAGLLGVESGQDAVIRMYLYERQGHVVAPYRHTVAEFTARISELRNRLAMCGVKDEGVIVPRQLGAENQTMSNVLSANYDSISYRRTPGEILRVVYSTGNESVPGGFYPNGGNGRIARRFLV.

Residues 1–25 (MAFLSNMAMFITMLMFSSMMHPCFS) form the signal peptide. 3 N-linked (GlcNAc...) asparagine glycosylation sites follow: N128, N257, and N289.

In terms of assembly, forms homomultimers. Observed in all flowers organs; mainly expressed in nectaries and, to a lower extent, in petals and ovules, as well as in stigmas and calyx at low levels.

It carries out the reaction 2 H2O2 = O2 + 2 H2O. Involved in the production of blood-red nectar containing the alkaloid nesocodin and that serves as a visual attractant for pollinator visitation, including vertebrates such as Phelsuma geckos. The nectar is initially acidic and pale yellow, but slowly becomes alkaline before turning into red within 24 hours. Together with NEC1 and NEC3, facilitates the condensation of sinapaldehyde ((E)-3,5-dimethoxy-4-hydroxycinnamaldehyde) and proline to form nesocodin, a pigment with a stable imine bond. Protects nesocodin from degradation by hydrogen peroxide H(2)O(2) by catalyzing the degradation of H(2)O(2) into water H(2)O and dioxygene O(2). This Nesocodon mauritianus (Blue Mauritius bellflower) protein is Ferritin-like catalase Nec2.